A 534-amino-acid chain; its full sequence is CTP synthase (534 aa).

The interval 1-267 is amidoligase domain; it reads MTKYIFVTGG…DQIVCDHLKL (267 aa). S13 lines the CTP pocket. S13 is a binding site for UTP. ATP is bound at residue 14–19; the sequence is SIGKGI. Y54 lines the L-glutamine pocket. D71 serves as a coordination point for ATP. Mg(2+)-binding residues include D71 and E141. Residues 148–150, 188–193, and K224 contribute to the CTP site; these read DIE and KTKPTQ. UTP-binding positions include 188–193 and K224; that span reads KTKPTQ. 240 to 242 is a binding site for ATP; it reads RDV. The Glutamine amidotransferase type-1 domain maps to 292 to 534; it reads KIALVGKYVE…FVTAAIKNSN (243 aa). G354 serves as a coordination point for L-glutamine. C381 (nucleophile; for glutamine hydrolysis) is an active-site residue. Residues 382–385, E405, and R463 each bind L-glutamine; that span reads LGMQ. Catalysis depends on residues H508 and E510.

Belongs to the CTP synthase family. In terms of assembly, homotetramer.

The catalysed reaction is UTP + L-glutamine + ATP + H2O = CTP + L-glutamate + ADP + phosphate + 2 H(+). It carries out the reaction L-glutamine + H2O = L-glutamate + NH4(+). It catalyses the reaction UTP + NH4(+) + ATP = CTP + ADP + phosphate + 2 H(+). It functions in the pathway pyrimidine metabolism; CTP biosynthesis via de novo pathway; CTP from UDP: step 2/2. With respect to regulation, allosterically activated by GTP, when glutamine is the substrate; GTP has no effect on the reaction when ammonia is the substrate. The allosteric effector GTP functions by stabilizing the protein conformation that binds the tetrahedral intermediate(s) formed during glutamine hydrolysis. Inhibited by the product CTP, via allosteric rather than competitive inhibition. In terms of biological role, catalyzes the ATP-dependent amination of UTP to CTP with either L-glutamine or ammonia as the source of nitrogen. Regulates intracellular CTP levels through interactions with the four ribonucleotide triphosphates. This Streptococcus pyogenes serotype M18 (strain MGAS8232) protein is CTP synthase.